Reading from the N-terminus, the 103-residue chain is Small ribosomal subunit protein uS10 (103 aa).

It belongs to the universal ribosomal protein uS10 family. As to quaternary structure, part of the 30S ribosomal subunit.

Functionally, involved in the binding of tRNA to the ribosomes. This is Small ribosomal subunit protein uS10 from Buchnera aphidicola subsp. Acyrthosiphon pisum (strain 5A).